A 215-amino-acid chain; its full sequence is MKPFVIAIDGPAASGKGTLARKIATHYHLHYLDTGLTYRGVAHALLQQKLALDDEKNALVYARELDFNTLNPALLSSHELGNAASKIAIIPTVRETLVAKQRNFAKILPGSVLDGRDIGTIVCPDADVKLYVLANVQIRAKRRYQEILKKGAQADYHEILVNLEQRDSRDITRKQSPLKQAKDAYLLDTSELSIEATFTVACALIDPIIKARIIG.

Residue 10–18 (GPAASGKGT) participates in ATP binding.

This sequence belongs to the cytidylate kinase family. Type 1 subfamily.

The protein resides in the cytoplasm. The catalysed reaction is CMP + ATP = CDP + ADP. The enzyme catalyses dCMP + ATP = dCDP + ADP. The protein is Cytidylate kinase of Bartonella henselae (strain ATCC 49882 / DSM 28221 / CCUG 30454 / Houston 1) (Rochalimaea henselae).